The primary structure comprises 123 residues: Large ribosomal subunit protein bL12 (123 aa).

The protein belongs to the bacterial ribosomal protein bL12 family. In terms of assembly, homodimer. Part of the ribosomal stalk of the 50S ribosomal subunit. Forms a multimeric L10(L12)X complex, where L10 forms an elongated spine to which 2 to 4 L12 dimers bind in a sequential fashion. Binds GTP-bound translation factors.

Forms part of the ribosomal stalk which helps the ribosome interact with GTP-bound translation factors. Is thus essential for accurate translation. This Rhodopseudomonas palustris (strain BisA53) protein is Large ribosomal subunit protein bL12.